The following is a 419-amino-acid chain: 3-phosphoshikimate 1-carboxyvinyltransferase (419 aa).

3-phosphoshikimate is bound by residues Lys-21, Ser-22, and Arg-26. A phosphoenolpyruvate-binding site is contributed by Lys-21. Residues Gly-91 and Arg-119 each contribute to the phosphoenolpyruvate site. Residues Ser-164, Ser-165, Gln-166, Ser-191, Asp-305, and Lys-332 each contribute to the 3-phosphoshikimate site. Residue Gln-166 coordinates phosphoenolpyruvate. Asp-305 serves as the catalytic Proton acceptor. Phosphoenolpyruvate-binding residues include Arg-336 and Arg-376.

Belongs to the EPSP synthase family. In terms of assembly, monomer.

Its subcellular location is the cytoplasm. The enzyme catalyses 3-phosphoshikimate + phosphoenolpyruvate = 5-O-(1-carboxyvinyl)-3-phosphoshikimate + phosphate. It participates in metabolic intermediate biosynthesis; chorismate biosynthesis. In terms of biological role, catalyzes the transfer of the enolpyruvyl moiety of phosphoenolpyruvate (PEP) to the 5-hydroxyl of shikimate-3-phosphate (S3P) to produce enolpyruvyl shikimate-3-phosphate and inorganic phosphate. The chain is 3-phosphoshikimate 1-carboxyvinyltransferase from Methanothermobacter thermautotrophicus (strain ATCC 29096 / DSM 1053 / JCM 10044 / NBRC 100330 / Delta H) (Methanobacterium thermoautotrophicum).